We begin with the raw amino-acid sequence, 582 residues long: Methionine--tRNA ligase (582 aa).

Positions 24-34 match the 'HIGH' region motif; that stretch reads PYIYAVPHLGN. Zn(2+) is bound by residues Cys-156, Cys-159, Cys-169, and Cys-172. A 'KMSKS' region motif is present at residues 346 to 350; it reads KFSKS. Position 349 (Lys-349) interacts with ATP.

It belongs to the class-I aminoacyl-tRNA synthetase family. MetG type 1 subfamily. Zn(2+) serves as cofactor.

It localises to the cytoplasm. The catalysed reaction is tRNA(Met) + L-methionine + ATP = L-methionyl-tRNA(Met) + AMP + diphosphate. Is required not only for elongation of protein synthesis but also for the initiation of all mRNA translation through initiator tRNA(fMet) aminoacylation. This Caldivirga maquilingensis (strain ATCC 700844 / DSM 13496 / JCM 10307 / IC-167) protein is Methionine--tRNA ligase.